We begin with the raw amino-acid sequence, 308 residues long: Transmembrane and ubiquitin-like domain-containing protein 1 (308 aa).

Residues 11–31 (VTVLFALVLFFMVLMLAWVST) traverse the membrane as a helical segment. The segment at 39 to 162 (THWIRPEPAQ…GLGDGTTAQS (124 aa)) is disordered. Positions 63–93 (PSQTLTNADPNSETVDSSDSTQSSREFQNAG) are enriched in polar residues. Residues 103–115 (SSSGSTVSTGGSV) show a composition bias toward low complexity. Over residues 132–149 (PNFTVSSRDPQAGASSSL) the composition is skewed to polar residues. Positions 169-242 (IHLRLKFLND…LHCHISQHAS (74 aa)) constitute a Ubiquitin-like domain. A run of 2 helical transmembrane segments spans residues 253-273 (VPLNVGNLLVPLLFLIVMLLW) and 283-303 (FTGTATACLGGFTLLISAIAF).

The protein resides in the membrane. It is found in the cytoplasm. Its subcellular location is the nucleus. May contribute to the regulation of translation during cell-cycle progression. May contribute to the regulation of cell proliferation. The membrane form is involved in sterol-regulated ubiquitination and degradation of HMG-CoA reductase HMGCR. May be involved in centrosome assembly. The polypeptide is Transmembrane and ubiquitin-like domain-containing protein 1 (tmub1) (Xenopus laevis (African clawed frog)).